A 346-amino-acid chain; its full sequence is Protein SHI RELATED SEQUENCE 5 (346 aa).

The segment at 7 to 31 is disordered; it reads LGGRDNNSNNNKQDHHQVDKDHHHQ. Residues 18–31 show a composition bias toward basic and acidic residues; the sequence is KQDHHQVDKDHHHQ. Residues Cys-125, Cys-128, Cys-136, Cys-141, Cys-145, and Cys-152 each contribute to the Zn(2+) site. The zn(2)-C6 fungal-type; degenerate DNA-binding region spans 125–152; sequence CQDCGNQAKKDCPHMRCRTCCKSRGFHC. Polar residues predominate over residues 175-186; it reads SLQHHSASSRET. The disordered stretch occupies residues 175-215; that stretch reads SLQHHSASSRETQNAKRLREASGGDNNDDKDHSGGGGSALA. Basic and acidic residues predominate over residues 187–207; sequence QNAKRLREASGGDNNDDKDHS. The short motif at 269–272 is the Required for homo- and heterodimerization element; that stretch reads IGGH.

Belongs to the SHI protein family.

It localises to the nucleus. In terms of biological role, transcription activator that binds DNA on 5'-ACTCTAC-3' and promotes auxin homeostasis-regulating gene expression (e.g. YUC genes), as well as genes affecting stamen development, cell expansion and timing of flowering. Synergistically with other SHI-related proteins, regulates gynoecium, stamen and leaf development in a dose-dependent manner, controlling apical-basal patterning. Promotes style and stigma formation, and influences vascular development during gynoecium development. May also have a role in the formation and/or maintenance of the shoot apical meristem (SAM). The protein is Protein SHI RELATED SEQUENCE 5 (SRS5) of Arabidopsis thaliana (Mouse-ear cress).